Reading from the N-terminus, the 66-residue chain is DNA gyrase inhibitor YacG (66 aa).

C9, C12, C28, and C32 together coordinate Zn(2+). Residues 45–66 (HKIAGSQESEDELYSGDLEPRH) are disordered.

It belongs to the DNA gyrase inhibitor YacG family. Interacts with GyrB. Zn(2+) serves as cofactor.

Its function is as follows. Inhibits all the catalytic activities of DNA gyrase by preventing its interaction with DNA. Acts by binding directly to the C-terminal domain of GyrB, which probably disrupts DNA binding by the gyrase. This Pseudomonas putida (strain W619) protein is DNA gyrase inhibitor YacG.